A 348-amino-acid chain; its full sequence is MSDRLTLLRPDDWHIHLRDGAVLQHTVGDVARTFARAIIMPNLVPPVRNALEAGGYRERILAARPAGSRFEPLMVLYLTDRTSPEDIRAAKASGFVYAAKLYPAGATTNSDSGVTSIDNIFPAIEALAETGMPLLVHGEVTRSEIDVFDREKRFIDEHMRRLVERFPTLKVVFEHITTADAAQFVTEAPANVGATITAQHLLYNRNHMLVGGIRPHFYCLPILKRNTHQVALLDAATSGNPKFFLGTDSAPHAKHAKEAACGCAGCYTAYAAIELYAEAFEQRNALDKLEGFASKHGPDFYGLPRNTDTITLVRDEWTAPDSLPFGDNTVIPLRAGEKLRWRLLEDNA.

Residues His14 and His16 each coordinate Zn(2+). Residues 16–18 and Asn42 each bind substrate; that span reads HLR. Residues Lys100, His137, and His175 each coordinate Zn(2+). Lys100 is modified (N6-carboxylysine). Position 137 (His137) interacts with substrate. Leu220 is a binding site for substrate. Asp248 is a binding site for Zn(2+). The active site involves Asp248. Substrate contacts are provided by His252 and Ala264.

This sequence belongs to the metallo-dependent hydrolases superfamily. DHOase family. Class II DHOase subfamily. Homodimer. The cofactor is Zn(2+).

The catalysed reaction is (S)-dihydroorotate + H2O = N-carbamoyl-L-aspartate + H(+). It participates in pyrimidine metabolism; UMP biosynthesis via de novo pathway; (S)-dihydroorotate from bicarbonate: step 3/3. Catalyzes the reversible cyclization of carbamoyl aspartate to dihydroorotate. The sequence is that of Dihydroorotase from Pseudomonas entomophila (strain L48).